Here is a 375-residue protein sequence, read N- to C-terminus: Succinyl-diaminopimelate desuccinylase (375 aa).

His-66 contributes to the Zn(2+) binding site. Asp-68 is a catalytic residue. Residue Asp-99 participates in Zn(2+) binding. Glu-133 acts as the Proton acceptor in catalysis. Glu-134, Glu-162, and His-348 together coordinate Zn(2+).

Belongs to the peptidase M20A family. DapE subfamily. In terms of assembly, homodimer. Zn(2+) serves as cofactor. Co(2+) is required as a cofactor.

It carries out the reaction N-succinyl-(2S,6S)-2,6-diaminopimelate + H2O = (2S,6S)-2,6-diaminopimelate + succinate. It functions in the pathway amino-acid biosynthesis; L-lysine biosynthesis via DAP pathway; LL-2,6-diaminopimelate from (S)-tetrahydrodipicolinate (succinylase route): step 3/3. Catalyzes the hydrolysis of N-succinyl-L,L-diaminopimelic acid (SDAP), forming succinate and LL-2,6-diaminopimelate (DAP), an intermediate involved in the bacterial biosynthesis of lysine and meso-diaminopimelic acid, an essential component of bacterial cell walls. The sequence is that of Succinyl-diaminopimelate desuccinylase from Yersinia pestis bv. Antiqua (strain Antiqua).